A 194-amino-acid polypeptide reads, in one-letter code: CMRF35-like molecule 5 (194 aa).

The first 18 residues, 1-18, serve as a signal peptide directing secretion; the sequence is MWLSPSLLLLILPGYSIA. Positions 19-125 constitute an Ig-like V-type domain; that stretch reads AKITGPTTVN…LGVKVQVTIN (107 aa). Residues 19–165 lie on the Extracellular side of the membrane; it reads AKITGPTTVN…LTRSPLKSTH (147 aa). An N-linked (GlcNAc...) asparagine glycan is attached at Asn-28. Residues Cys-39 and Cys-107 are joined by a disulfide bond. Residues 166 to 186 form a helical membrane-spanning segment; the sequence is FLFLFLLELPLLLSMLGTVLW. The Cytoplasmic segment spans residues 187–194; the sequence is VNRPQRRS.

Belongs to the CD300 family. Forms complexes with the CD300 family members with exception of CD300c. Post-translationally, N-glycosylated. As to expression, expression seems restricted to cells of myeloid lineage.

It localises to the cell membrane. This chain is CMRF35-like molecule 5 (CD300LD), found in Homo sapiens (Human).